Here is a 161-residue protein sequence, read N- to C-terminus: MSQLTHINAAGEAHMVDVSAKAETVREARAEAFVTMRSETLAMIIDGRHHKGDVFATARIVGIQAAKRTWDLIPLCHPLMLSKVEVNLQAEPEHNRVRIETLCRLTGKTGVEMEALTAASVAALTIYDMCKAVQKDMVIGPVRLLAKSGGKSGDFKVEADD.

Residues 75–77 (LCH) and 113–114 (ME) contribute to the substrate site. D128 is a catalytic residue.

Belongs to the MoaC family. As to quaternary structure, homohexamer; trimer of dimers.

It catalyses the reaction (8S)-3',8-cyclo-7,8-dihydroguanosine 5'-triphosphate = cyclic pyranopterin phosphate + diphosphate. Its pathway is cofactor biosynthesis; molybdopterin biosynthesis. In terms of biological role, catalyzes the conversion of (8S)-3',8-cyclo-7,8-dihydroguanosine 5'-triphosphate to cyclic pyranopterin monophosphate (cPMP). The protein is Cyclic pyranopterin monophosphate synthase of Shigella sonnei (strain Ss046).